The chain runs to 518 residues: 2-isopropylmalate synthase (518 aa).

One can recognise a Pyruvate carboxyltransferase domain in the interval V5–Y267. Mn(2+) is bound by residues D14, H202, H204, and N238. The segment at S392–N518 is regulatory domain.

The protein belongs to the alpha-IPM synthase/homocitrate synthase family. LeuA type 1 subfamily. Homodimer. Requires Mn(2+) as cofactor.

The protein localises to the cytoplasm. The catalysed reaction is 3-methyl-2-oxobutanoate + acetyl-CoA + H2O = (2S)-2-isopropylmalate + CoA + H(+). Its pathway is amino-acid biosynthesis; L-leucine biosynthesis; L-leucine from 3-methyl-2-oxobutanoate: step 1/4. In terms of biological role, catalyzes the condensation of the acetyl group of acetyl-CoA with 3-methyl-2-oxobutanoate (2-ketoisovalerate) to form 3-carboxy-3-hydroxy-4-methylpentanoate (2-isopropylmalate). In Buchnera aphidicola subsp. Rhopalosiphum padi, this protein is 2-isopropylmalate synthase.